A 71-amino-acid polypeptide reads, in one-letter code: Small ribosomal subunit protein bS21 (71 aa).

Positions 40–71 (KPTQERKRKAAAAVKRNIRRTSRDVTKRKRLY) are disordered. Basic residues predominate over residues 45 to 71 (RKRKAAAAVKRNIRRTSRDVTKRKRLY).

It belongs to the bacterial ribosomal protein bS21 family.

This is Small ribosomal subunit protein bS21 from Xylella fastidiosa (strain M23).